The primary structure comprises 190 residues: Venom nerve growth factor (190 aa).

The signal sequence occupies residues 1–7 (FLIGIWA). The propeptide occupies 8 to 111 (APKSEDNVPL…SLNRNIRAKR (104 aa)). A disulfide bond links cysteine 125 and cysteine 190. N-linked (GlcNAc...) asparagine glycosylation is present at asparagine 134.

This sequence belongs to the NGF-beta family. Homodimer; non-covalently linked. In terms of processing, glycosylated. Expressed by the venom gland.

It is found in the secreted. Nerve growth factor is important for the development and maintenance of the sympathetic and sensory nervous systems. It stimulates division and differentiation of sympathetic and embryonic sensory neurons as well as basal forebrain cholinergic neurons in the brain. Its relevance in the snake venom is not clear. However, it has been shown to inhibit metalloproteinase-dependent proteolysis of platelet glycoprotein Ib alpha, suggesting a metalloproteinase inhibition to prevent metalloprotease autodigestion and/or protection against prey proteases. Binds a lipid between the two protein chains in the homodimer. The lipid-bound form promotes histamine relase from mouse mast cells, contrary to the lipid-free form. The chain is Venom nerve growth factor from Agkistrodon contortrix contortrix (Southern copperhead).